We begin with the raw amino-acid sequence, 248 residues long: 2,3-bisphosphoglycerate-dependent phosphoglycerate mutase (248 aa).

Substrate-binding positions include 10-17 (RHGQSEWN), 23-24 (TG), Arg-62, 89-92 (ERHY), Lys-100, 116-117 (RR), and 183-184 (GN). The active-site Tele-phosphohistidine intermediate is His-11. Glu-89 (proton donor/acceptor) is an active-site residue.

The protein belongs to the phosphoglycerate mutase family. BPG-dependent PGAM subfamily.

It catalyses the reaction (2R)-2-phosphoglycerate = (2R)-3-phosphoglycerate. The protein operates within carbohydrate degradation; glycolysis; pyruvate from D-glyceraldehyde 3-phosphate: step 3/5. In terms of biological role, catalyzes the interconversion of 2-phosphoglycerate and 3-phosphoglycerate. This is 2,3-bisphosphoglycerate-dependent phosphoglycerate mutase from Corynebacterium diphtheriae (strain ATCC 700971 / NCTC 13129 / Biotype gravis).